The following is a 141-amino-acid chain: Large-conductance mechanosensitive channel (141 aa).

The next 3 membrane-spanning stretches (helical) occupy residues 16–36, 40–60, and 86–106; these read VIDL…VDSV, LIMP…MFIV, and GNFL…FLMV.

This sequence belongs to the MscL family. In terms of assembly, homopentamer.

The protein resides in the cell inner membrane. Functionally, channel that opens in response to stretch forces in the membrane lipid bilayer. May participate in the regulation of osmotic pressure changes within the cell. This Cupriavidus necator (strain ATCC 17699 / DSM 428 / KCTC 22496 / NCIMB 10442 / H16 / Stanier 337) (Ralstonia eutropha) protein is Large-conductance mechanosensitive channel.